The primary structure comprises 246 residues: Transcription factor MYB113 (246 aa).

2 consecutive HTH myb-type domains span residues 5–61 (PKGL…KPSI) and 62–112 (KRGK…SKKH). DNA-binding regions (H-T-H motif) lie at residues 33-57 (WHRV…LNYL) and 85-108 (WSLI…NTHL).

Interacts with BHLH002/EGL3/MYC146, BHLH012/MYC1 and BHLH042/TT8.

Its subcellular location is the nucleus. Functionally, transcription activator, when associated with BHLH002/EGL3/MYC146, BHLH012/MYC1, or BHLH042/TT8. The protein is Transcription factor MYB113 (MYB113) of Arabidopsis thaliana (Mouse-ear cress).